The sequence spans 591 residues: L-fucose isomerase (591 aa).

Residues E337 and D361 each act as proton acceptor in the active site. Mn(2+) is bound by residues E337, D361, and H528.

The protein belongs to the L-fucose isomerase family. Homohexamer. Requires Mn(2+) as cofactor.

The protein resides in the cytoplasm. The enzyme catalyses L-fucose = L-fuculose. It participates in carbohydrate degradation; L-fucose degradation; L-lactaldehyde and glycerone phosphate from L-fucose: step 1/3. Functionally, converts the aldose L-fucose into the corresponding ketose L-fuculose. This Shigella dysenteriae serotype 1 (strain Sd197) protein is L-fucose isomerase.